A 46-amino-acid chain; its full sequence is Protein PsbN (46 aa).

A helical membrane pass occupies residues 10–30; it reads VAIAVLAALLGLTGFGVYTAF.

It belongs to the PsbN family.

The protein localises to the cellular thylakoid membrane. May play a role in photosystem I and II biogenesis. The sequence is that of Protein PsbN from Synechococcus sp. (strain CC9311).